The primary structure comprises 754 residues: Disintegrin and metalloproteinase domain-containing protein 7 (754 aa).

An N-terminal signal peptide occupies residues 1 to 18 (MLPGCIFLMILLIPQVKE). The propeptide occupies 19–176 (KFILGVEGQQ…NYSCTELNFT (158 aa)). The Extracellular portion of the chain corresponds to 19-668 (KFILGVEGQQ…ACEETLHVTN (650 aa)). 4 N-linked (GlcNAc...) asparagine glycosylation sites follow: asparagine 84, asparagine 167, asparagine 174, and asparagine 184. Residues 199–394 (KYVELFIVAD…YKPTCMLNIP (196 aa)) enclose the Peptidase M12B domain. 4 cysteine pairs are disulfide-bonded: cysteine 310/cysteine 389, cysteine 350/cysteine 373, cysteine 352/cysteine 357, and cysteine 460/cysteine 480. In terms of domain architecture, Disintegrin spans 402–488 (FQFCGNKKLD…ACPKDQFRVN (87 aa)). N-linked (GlcNAc...) asparagine glycans are attached at residues asparagine 584 and asparagine 668. Residues 669-689 (ITILVVVLVLVIVGIGVLILL) form a helical membrane-spanning segment. At 690–754 (VRYRKCIKLK…GIADPNQSAK (65 aa)) the chain is on the cytoplasmic side.

As to quaternary structure, interacts with ITM2B in sperm; the interaction increases following capacitation. Interacts with HSPA5 and CANX.

It is found in the membrane. Functionally, required for normal male fertility via maintenance of epithelial cell morphology in the caput epididymis and subsequently correct epididymis lumen structure required for sperm development. Plays a role in sperm motility, flagella morphology and tyrosine phosphorylation during sperm capacitance. Plays a role in normal expression levels of HSPA5, ITM2B and ADAM2 in sperm both prior to and post-capacitation. This is a non catalytic metalloprotease-like protein. The polypeptide is Disintegrin and metalloproteinase domain-containing protein 7 (Homo sapiens (Human)).